A 482-amino-acid chain; its full sequence is tRNA sulfurtransferase (482 aa).

One can recognise a THUMP domain in the interval 61-165 (AAIVAELTRI…DERLILVTAR (105 aa)). Residues 183-184 (LI), Lys-265, Gly-287, and Gln-296 contribute to the ATP site. Cysteines 344 and 456 form a disulfide. The 79-residue stretch at 404–482 (FSHNDVILDI…GFKNVKVYRP (79 aa)) folds into the Rhodanese domain. Catalysis depends on Cys-456, which acts as the Cysteine persulfide intermediate.

This sequence belongs to the ThiI family.

It is found in the cytoplasm. The catalysed reaction is [ThiI sulfur-carrier protein]-S-sulfanyl-L-cysteine + a uridine in tRNA + 2 reduced [2Fe-2S]-[ferredoxin] + ATP + H(+) = [ThiI sulfur-carrier protein]-L-cysteine + a 4-thiouridine in tRNA + 2 oxidized [2Fe-2S]-[ferredoxin] + AMP + diphosphate. It carries out the reaction [ThiS sulfur-carrier protein]-C-terminal Gly-Gly-AMP + S-sulfanyl-L-cysteinyl-[cysteine desulfurase] + AH2 = [ThiS sulfur-carrier protein]-C-terminal-Gly-aminoethanethioate + L-cysteinyl-[cysteine desulfurase] + A + AMP + 2 H(+). The protein operates within cofactor biosynthesis; thiamine diphosphate biosynthesis. Catalyzes the ATP-dependent transfer of a sulfur to tRNA to produce 4-thiouridine in position 8 of tRNAs, which functions as a near-UV photosensor. Also catalyzes the transfer of sulfur to the sulfur carrier protein ThiS, forming ThiS-thiocarboxylate. This is a step in the synthesis of thiazole, in the thiamine biosynthesis pathway. The sulfur is donated as persulfide by IscS. The chain is tRNA sulfurtransferase from Erwinia tasmaniensis (strain DSM 17950 / CFBP 7177 / CIP 109463 / NCPPB 4357 / Et1/99).